The sequence spans 262 residues: Small ribosomal subunit protein eS4 (262 aa).

An S4 RNA-binding domain is found at 42–105; it reads LPLVVFLRNR…NEHFRLVYDV (64 aa). Residues 178 to 211 enclose the KOW domain; sequence GRLVMVTGGRNLGRVGVIVHREKHEGGFDLVHIK.

It belongs to the eukaryotic ribosomal protein eS4 family. Component of the small ribosomal subunit. Mature ribosomes consist of a small (40S) and a large (60S) subunit. The 40S subunit contains about 32 different proteins and 1 molecule of RNA (18S). The 60S subunit contains 45 different proteins and 3 molecules of RNA (25S, 5.8S and 5S).

The protein resides in the cytoplasm. Component of the ribosome, a large ribonucleoprotein complex responsible for the synthesis of proteins in the cell. The small ribosomal subunit (SSU) binds messenger RNAs (mRNAs) and translates the encoded message by selecting cognate aminoacyl-transfer RNA (tRNA) molecules. The large subunit (LSU) contains the ribosomal catalytic site termed the peptidyl transferase center (PTC), which catalyzes the formation of peptide bonds, thereby polymerizing the amino acids delivered by tRNAs into a polypeptide chain. The nascent polypeptides leave the ribosome through a tunnel in the LSU and interact with protein factors that function in enzymatic processing, targeting, and the membrane insertion of nascent chains at the exit of the ribosomal tunnel. The chain is Small ribosomal subunit protein eS4 (RPS42) from Candida albicans (strain SC5314 / ATCC MYA-2876) (Yeast).